Reading from the N-terminus, the 154-residue chain is MSETKPASSKPAAAAKPKKVIPRVSRTGEPKSKPESRSARAGITFPVSRVDRLLREGRFAPRVESTAPVYLAAVLEYLVFEILELAHNTCSISKKTRITPQHINWAVGNDLELNSLFQHVTIAYGGVLPTPQQSTGEKKKKPSKKAAEGSSQIY.

Positions 1 to 15 (MSETKPASSKPAAAA) are enriched in low complexity. 2 disordered regions span residues 1–41 (MSET…SARA) and 128–154 (LPTP…SQIY). The span at 26–38 (RTGEPKSKPESRS) shows a compositional bias: basic and acidic residues. Serine 151 carries the post-translational modification Phosphoserine. Positions 151–152 (SQ) match the [ST]-Q motif motif.

This sequence belongs to the histone H2A family. In terms of assembly, the nucleosome is a histone octamer containing two molecules each of H2A, H2B, H3 and H4 assembled in one H3-H4 heterotetramer and two H2A-H2B heterodimers. The octamer wraps approximately 147 bp of DNA. Phosphorylated at Ser-151 to form H2AS128ph (gamma-H2AX) in response to DNA double-strand breaks (DSBs) generated by exogenous genotoxic agents and by stalled replication forks. Phosphorylation is dependent on the DNA damage checkpoint kinase atr1 and/or possibly dnapkcs, spreads on either side of a detected DSB site and may mark the surrounding chromatin for recruitment of proteins required for DNA damage signaling and repair. Gamma-H2AX is removed from the DNA prior to the strand invasion-primer extension step of the repair process and subsequently dephosphorylated. Dephosphorylation is necessary for efficient recovery from the DNA damage checkpoint.

The protein resides in the nucleus. The protein localises to the chromosome. Core component of nucleosome which plays a central role in DNA double strand break (DSB) repair. Nucleosomes wrap and compact DNA into chromatin, limiting DNA accessibility to the cellular machineries which require DNA as a template. Histones thereby play a central role in transcription regulation, DNA repair, DNA replication and chromosomal stability. DNA accessibility is regulated via a complex set of post-translational modifications of histones, also called histone code, and nucleosome remodeling. Phosphorylation of H2AX seems to be performed by atr1 and/or possibly dnapkcs, as ATM ortholog is absent in the genome of this organism. This chain is Histone H2AX (H2AX), found in Dictyostelium discoideum (Social amoeba).